Reading from the N-terminus, the 787-residue chain is MQSSKGRRKVGSTTAGAGIDSAEKLDELLISSAICNGEDLGPFVRKTFGTGKPETLLHHLKFFARSKESEIEEVCKAHYQDFIHAVDDLKSLLSDVESLKSALSDSNSKLQSVAAPLLSSLDSLVEAQTVSKNVDLAIGAVTHCVRVMELVSRANQHLQSGNFYMALKCVDSIESDFMEKTPSSTLKRMLENRIPAIRSYVERKVNKEFGDWLVEIRVVSRNLGQLAIGEASAARQREEELRIKQRQAEEQSRLSLRDCVYALNEEEDDEFGSGHEGSDGGSSGGGLLGFDLTPLYRAYHIHQTLSLGDTFKQYYYNNRDLQLTSDFQIAGFFIVEDRVLRTGGGLISKLEVETLWDTAVTKMCAVLEDQFSRMQTANHLLLIKDYVSLLGVSLRRYGYAVDSLLEVLSKHRDKYHELLLSDCRKQITEALSADKFEQMLMKKEYEYSMNVLSFQLQTSEIVPAFPFIAPFSTTVPDCCRIVRSFIEDSVSFMSHGGQLDFYDVVKKYLDRLLGEVLDEALLKLISTSVHGVSQAMQVAANMAVFERACDFFFRHAAHLSGVPLRMAERGRRHFPLTKSQNTAEDTLSGMLKKKIDGFMTLLENVNWTSDDIPQGGNEYMNEVLIYLETLVSTAQQILPAKVLKRVLRDVLAHISEKIVGTLCGDLVKRLSMAAIKGLDVDIQLLDSFTENLTPLLTDKEAREMKKAFVEIRQMINLLLSSHPENFVNPVIRERSYNALDYRKVATVSEKFRDPSDSIFGTFGTRGSRQNPKNKSLDALIKRLKDVS.

It belongs to the SEC15 family. In terms of assembly, the exocyst complex is composed of SEC3, SEC5, SEC6, SEC8, SEC10, EXO70A1 and EXO84B. Interacts with EXO84B. Binds to EXO70H1 AND EXO70B2. Binds directly to B1L.

The protein localises to the cytoplasm. The protein resides in the cytosol. Its subcellular location is the cytoskeleton. It is found in the phragmoplast. It localises to the secreted. The protein localises to the cell wall. The protein resides in the extracellular exosome. Its function is as follows. Component of the exocyst complex involved in the docking of exocytic vesicles with fusion sites on the plasma membrane during regulated or polarized secretion. Involved in polarized cell growth and organ morphogenesis. During cytokinesis, involved in cell plate initiation, cell plate maturation and formation of new primary cell wall. This is Exocyst complex component SEC15B from Arabidopsis thaliana (Mouse-ear cress).